Reading from the N-terminus, the 465-residue chain is Glutathione reductase (465 aa).

Serine 16 and glycine 17 together coordinate FAD. Residue serine 16 participates in glutathione binding. Arginine 23 provides a ligand contact to glutathione. The FAD site is built by glutamate 42, threonine 49, cysteine 50, and lysine 58. A disulfide bridge links cysteine 50 with cysteine 55. Tyrosine 108 serves as a coordination point for glutathione. Glycine 124 lines the FAD pocket. Residues alanine 187, isoleucine 190, glutamate 193, arginine 210, arginine 216, and glycine 276 each coordinate NADP(+). Aspartate 318 lines the FAD pocket. Leucine 324 is an NADP(+) binding site. FAD is bound at residue threonine 326. Position 334 (arginine 334) interacts with glutathione. Valine 357 is an NADP(+) binding site. Residue histidine 454 participates in FAD binding. Histidine 454 serves as the catalytic Proton acceptor.

This sequence belongs to the class-I pyridine nucleotide-disulfide oxidoreductase family. The cofactor is FAD.

It is found in the cytoplasm. The enzyme catalyses 2 glutathione + NADP(+) = glutathione disulfide + NADPH + H(+). In terms of biological role, catalyzes the reduction of glutathione disulfide (GSSG) to reduced glutathione (GSH). Constitutes the major mechanism to maintain a high GSH:GSSG ratio in the cytosol. The amount of GSH may affect the determination of cell fate. The sequence is that of Glutathione reductase (gsr) from Dictyostelium discoideum (Social amoeba).